The chain runs to 438 residues: Succinyl-CoA:glutarate CoA-transferase (438 aa).

A mitochondrion-targeting transit peptide spans 1 to 31 (MLATLARVAALRRTCLFSGRGGGRGLWTGRP). The Nucleophile role is filled by aspartate 205. Residue lysine 394 is modified to N6-acetyllysine.

The protein belongs to the CoA-transferase III family. Highly expressed in kidney. Intermediate expression in liver, skeletal muscle and pancreas. Little to no expression detected in other tissues examined.

Its subcellular location is the mitochondrion. The enzyme catalyses glutarate + succinyl-CoA = glutaryl-CoA + succinate. It catalyses the reaction 3-hydroxy-3-methylglutarate + succinyl-CoA = (3S)-3-hydroxy-3-methylglutaryl-CoA + succinate. The catalysed reaction is 3-hydroxy-3-methylglutarate + glutaryl-CoA = (3S)-3-hydroxy-3-methylglutaryl-CoA + glutarate. It carries out the reaction hexanedioate + glutaryl-CoA = hexanedioyl-CoA + glutarate. The enzyme catalyses itaconate + glutaryl-CoA = itaconyl-CoA + glutarate. It catalyses the reaction itaconate + succinyl-CoA = itaconyl-CoA + succinate. Its activity is regulated as follows. Inhibited by valsartan and losartan carboxylate. In terms of biological role, coenzyme A (CoA) transferase that reversibly catalyzes the transfer of a CoA moiety from a dicarboxyl-CoA to a dicarboxylate in a metabolite recycling process. Displays preference for succinyl-CoA and glutarate-CoA as dicarboxyl-CoA donors and glutarate, succinate, adipate/hexanedioate, itaconate and 3-hydroxy-3-methylglutarate as dicarboxylate acceptors. Acts on intermediates or end products of lysine and tryptophan degradation pathway, in particular catalyzes succinyl-CoA-dependent reesterification of free glutarate into glutaryl-CoA to prevent renal excretion of glutarate. Upon inflammation, may convert macrophage-derived itaconate to itaconyl-CoA in erythroid precursors where it negatively regulates the TCA cycle and heme synthesis to limit erythroid differentiation in the context of stress erythropoiesis. The protein is Succinyl-CoA:glutarate CoA-transferase of Homo sapiens (Human).